The primary structure comprises 306 residues: RNA-binding protein Raly (306 aa).

Ser2 is subject to N-acetylserine. Residue Lys4 forms a Glycyl lysine isopeptide (Lys-Gly) (interchain with G-Cter in SUMO2) linkage. In terms of domain architecture, RRM spans 21–92 (SRVFIGNLNT…QTLDINMAGE (72 aa)). Lys44 is subject to N6-acetyllysine. Position 63 is a phosphoserine (Ser63). Glycyl lysine isopeptide (Lys-Gly) (interchain with G-Cter in SUMO2) cross-links involve residues Lys94 and Lys99. Residues Ser106 and Ser135 each carry the phosphoserine modification. A Glycyl lysine isopeptide (Lys-Gly) (interchain with G-Cter in SUMO2) cross-link involves residue Lys159. Lys165 is subject to N6-acetyllysine; alternate. Lys165 is covalently cross-linked (Glycyl lysine isopeptide (Lys-Gly) (interchain with G-Cter in SUMO2); alternate). Glycyl lysine isopeptide (Lys-Gly) (interchain with G-Cter in SUMO2) cross-links involve residues Lys179 and Lys191. A coiled-coil region spans residues 183–216 (KSSELQAIKTELTQIKSNIDALLSRLEQIAAEQK). Positions 215-306 (QKANPDGKKK…DTDADDGALQ (92 aa)) are disordered. Residues 217–226 (ANPDGKKKGD) are compositionally biased toward basic and acidic residues. A compositionally biased stretch (gly residues) spans 227-252 (GGGAGGGGGGGGSGGGGSGGGGGGGS). Residues 227–253 (GGGAGGGGGGGGSGGGGSGGGGGGGSS) form an epitope (recognized by BKRF1 antibodies) region. A Phosphothreonine modification is found at Thr262. Ser264 carries the post-translational modification Phosphoserine. At Thr286 the chain carries Phosphothreonine. Residues 287-297 (HSEEELEHSQD) show a composition bias toward basic and acidic residues. A phosphoserine mark is found at Ser288 and Ser295. Thr298 bears the Phosphothreonine mark.

It belongs to the RRM HNRPC family. RALY subfamily. As to quaternary structure, identified in the spliceosome C complex. Interacts (through its RNA-binding domain) with FUS (through its RNA-binding domain); both are components of the same RNPs. Expressed in heart, brain, lung, liver, skeletal muscle, kidney and pancreas. Weakly expressed in placenta.

Its subcellular location is the nucleus. Functionally, RNA-binding protein that acts as a transcriptional cofactor for cholesterol biosynthetic genes in the liver. Binds the lipid-responsive non-coding RNA LeXis and is required for LeXis-mediated effect on cholesterogenesis. May be a heterogeneous nuclear ribonucleoprotein (hnRNP). This chain is RNA-binding protein Raly (RALY), found in Homo sapiens (Human).